Reading from the N-terminus, the 32-residue chain is ARIECDCGSIENPCCYATTCKLRPGSQCAEGM.

2 disulfides stabilise this stretch: Cys-5/Cys-14 and Cys-7/Cys-15.

The protein belongs to the venom metalloproteinase (M12B) family. P-II subfamily. P-IIa sub-subfamily. In terms of assembly, monomer. Expressed by the venom gland.

It is found in the secreted. Functionally, snake venom metalloproteinase that impairs hemostasis in the envenomed animal. The chain is Zinc metalloproteinase/disintegrin-like CdtV1 from Crotalus durissus terrificus (South American rattlesnake).